The chain runs to 410 residues: MNEYAPLRLHVPEPTGRPGCQTDFSYLRLNDAGQARKPPVDVDAADTADLSYSLVRVLDEQGDAQGPWAEDIDPQILRQGMRAMLKTRIFDSRMVVAQRQKKMSFYMQSLGEEAIGSGQALALNRTDMCFPTYRQQSILMARDVSLVEMICQLLSNERDPLKGRQLPIMYSVREAGFFTISGNLATQFVQAVGWAMASAIKGDTKIASAWIGDGATAESDFHTALTFAHVYRAPVILNVVNNQWAISTFQAIAGGESTTFAGRGVGCGIASLRVDGNDFVAVYAASRWAAERARRGLGPSLIEWVTYRAGPHSTSDDPSKYRPADDWSHFPLGDPIARLKQHLIKIGHWSEEEHQATTAEFEAAVIAAQKEAEQYGTLANGHIPSAASMFEDVYKEMPDHLRRQRQELGV.

This sequence belongs to the BCKDHA family. In terms of assembly, heterodimer of an alpha and a beta chain. Thiamine diphosphate is required as a cofactor.

The catalysed reaction is N(6)-[(R)-lipoyl]-L-lysyl-[protein] + 3-methyl-2-oxobutanoate + H(+) = N(6)-[(R)-S(8)-2-methylpropanoyldihydrolipoyl]-L-lysyl-[protein] + CO2. In terms of biological role, the branched-chain alpha-keto dehydrogenase complex catalyzes the overall conversion of alpha-keto acids to acyl-CoA and CO(2). It contains multiple copies of three enzymatic components: branched-chain alpha-keto acid decarboxylase (E1), lipoamide acyltransferase (E2) and lipoamide dehydrogenase (E3). This is 2-oxoisovalerate dehydrogenase subunit alpha (bkdA1) from Pseudomonas putida (Arthrobacter siderocapsulatus).